A 130-amino-acid chain; its full sequence is Translation initiation factor 5A (130 aa).

Lys-36 is subject to Hypusine.

This sequence belongs to the eIF-5A family.

It localises to the cytoplasm. In terms of biological role, functions by promoting the formation of the first peptide bond. The protein is Translation initiation factor 5A (eif5a) of Methanothermobacter thermautotrophicus (strain ATCC 29096 / DSM 1053 / JCM 10044 / NBRC 100330 / Delta H) (Methanobacterium thermoautotrophicum).